The primary structure comprises 84 residues: U-actitoxin-Avd8e (84 aa).

The N-terminal stretch at 1 to 22 (MASARTLVLLLIGAVLMCQVSA) is a signal peptide. A propeptide spanning residues 23 to 41 (DSELLNEILAAHMEEDMPE) is cleaved from the precursor. In terms of domain architecture, ShKT spans 44–84 (CIDRYRSNICGSVIRPLDCTRRKSRMGRFARTNCKKLCGFC). Intrachain disulfides connect C44-C84, C53-C77, and C62-C81.

The protein belongs to the sea anemone 8 toxin family.

The protein resides in the secreted. Its subcellular location is the nematocyst. The sequence is that of U-actitoxin-Avd8e from Anemonia viridis (Snakelocks anemone).